A 110-amino-acid chain; its full sequence is MEVAAKLRGAGMSAQKARLVADQIRGKSVEEALDLLTFSTKKGAALIKKVLESAVANAEHNEGADVDELKVSTIFVDEGLTMKRIRPRAKGRADRILKRTCHITVKVADQ.

This sequence belongs to the universal ribosomal protein uL22 family. As to quaternary structure, part of the 50S ribosomal subunit.

Its function is as follows. This protein binds specifically to 23S rRNA; its binding is stimulated by other ribosomal proteins, e.g. L4, L17, and L20. It is important during the early stages of 50S assembly. It makes multiple contacts with different domains of the 23S rRNA in the assembled 50S subunit and ribosome. In terms of biological role, the globular domain of the protein is located near the polypeptide exit tunnel on the outside of the subunit, while an extended beta-hairpin is found that lines the wall of the exit tunnel in the center of the 70S ribosome. The chain is Large ribosomal subunit protein uL22 from Saccharophagus degradans (strain 2-40 / ATCC 43961 / DSM 17024).